A 149-amino-acid polypeptide reads, in one-letter code: 3-dehydroquinate dehydratase (149 aa).

Tyrosine 26 serves as the catalytic Proton acceptor. Substrate-binding residues include asparagine 77, histidine 83, and aspartate 90. Catalysis depends on histidine 103, which acts as the Proton donor. Residues 104 to 105 (LS) and arginine 114 contribute to the substrate site.

It belongs to the type-II 3-dehydroquinase family. As to quaternary structure, homododecamer.

It carries out the reaction 3-dehydroquinate = 3-dehydroshikimate + H2O. Its pathway is metabolic intermediate biosynthesis; chorismate biosynthesis; chorismate from D-erythrose 4-phosphate and phosphoenolpyruvate: step 3/7. In terms of biological role, catalyzes a trans-dehydration via an enolate intermediate. The polypeptide is 3-dehydroquinate dehydratase (Psychromonas ingrahamii (strain DSM 17664 / CCUG 51855 / 37)).